The primary structure comprises 332 residues: Acetyl-coenzyme A carboxylase carboxyl transferase subunit beta (332 aa).

Residues 24–293 (LWIKCPDSGH…PEVIVESEPE (270 aa)) enclose the CoA carboxyltransferase N-terminal domain. The disordered stretch occupies residues 288-332 (VESEPEPEPEPVVAEIIPPTSDLPVSAPAPAPVAAQTPAPAAPSA). Low complexity predominate over residues 298-332 (PVVAEIIPPTSDLPVSAPAPAPVAAQTPAPAAPSA).

The protein belongs to the AccD/PCCB family. Acetyl-CoA carboxylase is a heterohexamer composed of biotin carboxyl carrier protein (AccB), biotin carboxylase (AccC) and two subunits each of ACCase subunit alpha (AccA) and ACCase subunit beta (AccD).

The protein resides in the cytoplasm. It carries out the reaction N(6)-carboxybiotinyl-L-lysyl-[protein] + acetyl-CoA = N(6)-biotinyl-L-lysyl-[protein] + malonyl-CoA. It participates in lipid metabolism; malonyl-CoA biosynthesis; malonyl-CoA from acetyl-CoA: step 1/1. Component of the acetyl coenzyme A carboxylase (ACC) complex. Biotin carboxylase (BC) catalyzes the carboxylation of biotin on its carrier protein (BCCP) and then the CO(2) group is transferred by the transcarboxylase to acetyl-CoA to form malonyl-CoA. This chain is Acetyl-coenzyme A carboxylase carboxyl transferase subunit beta, found in Rhodopseudomonas palustris (strain BisB18).